Consider the following 319-residue polypeptide: tRNA dimethylallyltransferase (319 aa).

ATP is bound at residue 9-16; that stretch reads GPTAVGKS. Substrate is bound at residue 11–16; that stretch reads TAVGKS. The segment at 39-42 is interaction with substrate tRNA; it reads DSMQ.

It belongs to the IPP transferase family. As to quaternary structure, monomer. Requires Mg(2+) as cofactor.

The enzyme catalyses adenosine(37) in tRNA + dimethylallyl diphosphate = N(6)-dimethylallyladenosine(37) in tRNA + diphosphate. Functionally, catalyzes the transfer of a dimethylallyl group onto the adenine at position 37 in tRNAs that read codons beginning with uridine, leading to the formation of N6-(dimethylallyl)adenosine (i(6)A). The polypeptide is tRNA dimethylallyltransferase (Thermobifida fusca (strain YX)).